The following is a 202-amino-acid chain: N-(5'-phosphoribosyl)anthranilate isomerase (202 aa).

It belongs to the TrpF family.

It catalyses the reaction N-(5-phospho-beta-D-ribosyl)anthranilate = 1-(2-carboxyphenylamino)-1-deoxy-D-ribulose 5-phosphate. The protein operates within amino-acid biosynthesis; L-tryptophan biosynthesis; L-tryptophan from chorismate: step 3/5. The polypeptide is N-(5'-phosphoribosyl)anthranilate isomerase (Bacillus cereus (strain ATCC 14579 / DSM 31 / CCUG 7414 / JCM 2152 / NBRC 15305 / NCIMB 9373 / NCTC 2599 / NRRL B-3711)).